We begin with the raw amino-acid sequence, 254 residues long: Trypsin 3A1 (254 aa).

Residues 1–20 (MNQFLFVSFCALLGLSQVSA) form the signal peptide. A propeptide spans 21–27 (ATLSSGR) (activation peptide). In terms of domain architecture, Peptidase S1 spans 28 to 253 (IVGGFQIDIA…VRQWIREVSE (226 aa)). A disulfide bond links Cys53 and Cys69. Catalysis depends on charge relay system residues His68 and Asp113. Disulfide bonds link Cys178-Cys194 and Cys205-Cys229. The Charge relay system role is filled by Ser209.

It belongs to the peptidase S1 family. Midgut.

It is found in the secreted. The protein localises to the extracellular space. It catalyses the reaction Preferential cleavage: Arg-|-Xaa, Lys-|-Xaa.. Functionally, major function may be to aid in digestion of the blood meal. This Aedes aegypti (Yellowfever mosquito) protein is Trypsin 3A1.